A 539-amino-acid polypeptide reads, in one-letter code: Chaperonin GroEL (539 aa).

ATP contacts are provided by residues Thr29–Pro32, Asp86–Thr90, Gly413, Asn476–Ala478, and Asp492.

This sequence belongs to the chaperonin (HSP60) family. As to quaternary structure, forms a cylinder of 14 subunits composed of two heptameric rings stacked back-to-back. Interacts with the co-chaperonin GroES.

It localises to the cytoplasm. The catalysed reaction is ATP + H2O + a folded polypeptide = ADP + phosphate + an unfolded polypeptide.. Together with its co-chaperonin GroES, plays an essential role in assisting protein folding. The GroEL-GroES system forms a nano-cage that allows encapsulation of the non-native substrate proteins and provides a physical environment optimized to promote and accelerate protein folding. In Leuconostoc mesenteroides subsp. mesenteroides (strain ATCC 8293 / DSM 20343 / BCRC 11652 / CCM 1803 / JCM 6124 / NCDO 523 / NBRC 100496 / NCIMB 8023 / NCTC 12954 / NRRL B-1118 / 37Y), this protein is Chaperonin GroEL.